Here is a 353-residue protein sequence, read N- to C-terminus: WD repeat-containing protein 55 (353 aa).

WD repeat units lie at residues 4–43, 49–88, 92–130, 133–172, 175–214, 218–257, and 260–299; these read DLGA…SLVR, AHKE…QVAH, AHED…CSHE, AHED…VQSQ, FSED…DCSD, DLAP…IIQP, and SHDY…EGSN. The segment at 300-353 is disordered; it reads VNSGNASGAAEDSDSDNDGMDLDNDPSKSSKGSKRKTKSKANTLNATNNFFADL. The span at 310–323 shows a compositional bias: acidic residues; it reads EDSDSDNDGMDLDN. Low complexity predominate over residues 339–353; the sequence is KANTLNATNNFFADL.

Belongs to the WD repeat WDR55 family. In terms of assembly, interacts with DDB1A. As to expression, highly expressed in roots. Expressed in cotyledons, leaves, buds and flowers.

It is found in the nucleus. Its subcellular location is the cytoplasm. In terms of biological role, required for male and female gametogenesis, seed development, and embryo and endosperm development at early stages. Involved in the establishment of bilateral symmetry in the transition from the globular to the heart embryo stage. May act in the frame of a CRL4 complex. Required for proper vegetative growth and organization of the adult plant body. May play a role in hormonal control of plant development. The chain is WD repeat-containing protein 55 from Arabidopsis thaliana (Mouse-ear cress).